Consider the following 187-residue polypeptide: Pseudo histidine-containing phosphotransfer protein 1 (187 aa).

The region spanning 74 to 169 is the HPt domain; the sequence is SPNFVEEVVT…AVLRQKLESY (96 aa).

In terms of biological role, functions as a two-component phosphorelay mediator between cytokinin sensor histidine kinases and response regulators (B-type ARRs). Plays an important role in propagating cytokinin signal transduction. The polypeptide is Pseudo histidine-containing phosphotransfer protein 1 (Oryza sativa subsp. japonica (Rice)).